The following is a 137-amino-acid chain: MPTTNQLVNRGRTSKVQKQNAPALSWSYNSLIKRSKKMPSPFKRGVCTRVATMTPKKPNSALRKFARVKLSNGMEVTAYIPGEKHNIQEHSVVLIRGGRVKDLPGVRYHIVRGTQDVAGVNNRKQGRSLYGTKKDKK.

The disordered stretch occupies residues 1-20; the sequence is MPTTNQLVNRGRTSKVQKQN. Position 102 is a 3-methylthioaspartic acid (aspartate 102).

This sequence belongs to the universal ribosomal protein uS12 family. Part of the 30S ribosomal subunit. Contacts proteins S8 and S17. May interact with IF1 in the 30S initiation complex.

Its function is as follows. With S4 and S5 plays an important role in translational accuracy. Functionally, interacts with and stabilizes bases of the 16S rRNA that are involved in tRNA selection in the A site and with the mRNA backbone. Located at the interface of the 30S and 50S subunits, it traverses the body of the 30S subunit contacting proteins on the other side and probably holding the rRNA structure together. The combined cluster of proteins S8, S12 and S17 appears to hold together the shoulder and platform of the 30S subunit. This is Small ribosomal subunit protein uS12 from Mycoplasmopsis synoviae (strain 53) (Mycoplasma synoviae).